The chain runs to 385 residues: S-adenosylmethionine synthase (385 aa).

Residue histidine 16 participates in ATP binding. Aspartate 18 lines the Mg(2+) pocket. Residue glutamate 44 coordinates K(+). 2 residues coordinate L-methionine: glutamate 57 and glutamine 100. A flexible loop region spans residues 100–110 (QSPDINQGVDR). ATP contacts are provided by residues 164–166 (DGK), 230–231 (KF), aspartate 239, 245–246 (RK), alanine 262, and lysine 266. Aspartate 239 lines the L-methionine pocket. L-methionine is bound at residue lysine 270.

The protein belongs to the AdoMet synthase family. Homotetramer; dimer of dimers. It depends on Mg(2+) as a cofactor. Requires K(+) as cofactor.

The protein resides in the cytoplasm. It catalyses the reaction L-methionine + ATP + H2O = S-adenosyl-L-methionine + phosphate + diphosphate. Its pathway is amino-acid biosynthesis; S-adenosyl-L-methionine biosynthesis; S-adenosyl-L-methionine from L-methionine: step 1/1. Its function is as follows. Catalyzes the formation of S-adenosylmethionine (AdoMet) from methionine and ATP. The overall synthetic reaction is composed of two sequential steps, AdoMet formation and the subsequent tripolyphosphate hydrolysis which occurs prior to release of AdoMet from the enzyme. The protein is S-adenosylmethionine synthase of Helicobacter pylori (strain G27).